The chain runs to 118 residues: Large ribosomal subunit protein bL19 (118 aa).

The protein belongs to the bacterial ribosomal protein bL19 family.

In terms of biological role, this protein is located at the 30S-50S ribosomal subunit interface and may play a role in the structure and function of the aminoacyl-tRNA binding site. The polypeptide is Large ribosomal subunit protein bL19 (Frankia alni (strain DSM 45986 / CECT 9034 / ACN14a)).